We begin with the raw amino-acid sequence, 535 residues long: Bifunctional purine biosynthesis protein PurH (535 aa).

The MGS-like domain occupies 6–151 (TRLPVRRALI…KNHKDVAIVV (146 aa)).

This sequence belongs to the PurH family.

The catalysed reaction is (6R)-10-formyltetrahydrofolate + 5-amino-1-(5-phospho-beta-D-ribosyl)imidazole-4-carboxamide = 5-formamido-1-(5-phospho-D-ribosyl)imidazole-4-carboxamide + (6S)-5,6,7,8-tetrahydrofolate. It catalyses the reaction IMP + H2O = 5-formamido-1-(5-phospho-D-ribosyl)imidazole-4-carboxamide. Its pathway is purine metabolism; IMP biosynthesis via de novo pathway; 5-formamido-1-(5-phospho-D-ribosyl)imidazole-4-carboxamide from 5-amino-1-(5-phospho-D-ribosyl)imidazole-4-carboxamide (10-formyl THF route): step 1/1. The protein operates within purine metabolism; IMP biosynthesis via de novo pathway; IMP from 5-formamido-1-(5-phospho-D-ribosyl)imidazole-4-carboxamide: step 1/1. The chain is Bifunctional purine biosynthesis protein PurH from Pseudomonas putida (strain ATCC 700007 / DSM 6899 / JCM 31910 / BCRC 17059 / LMG 24140 / F1).